Consider the following 128-residue polypeptide: Protein C10 (128 aa).

It belongs to the UPF0456 family.

The protein localises to the cytoplasm. The protein is Protein C10 of Xenopus laevis (African clawed frog).